The chain runs to 188 residues: Elongation factor P (188 aa).

Belongs to the elongation factor P family.

It is found in the cytoplasm. Its pathway is protein biosynthesis; polypeptide chain elongation. In terms of biological role, involved in peptide bond synthesis. Stimulates efficient translation and peptide-bond synthesis on native or reconstituted 70S ribosomes in vitro. Probably functions indirectly by altering the affinity of the ribosome for aminoacyl-tRNA, thus increasing their reactivity as acceptors for peptidyl transferase. This is Elongation factor P from Chlorobium limicola (strain DSM 245 / NBRC 103803 / 6330).